The following is a 25-amino-acid chain: Ocellatin-L2 (25 aa).

Position 25 is a leucine amide (leucine 25).

This sequence belongs to the frog skin active peptide (FSAP) family. Ocellatin subfamily. Expressed by the skin glands.

The protein resides in the secreted. Functionally, shows a low activity in stimulating insulin release from rat BRIN-BD11 beta cells, and acts without loss of integrity of the plasma membrane. Does not show antibacterial (E.coli and S.aureus). Does not show hemolytic activity against human erythrocytes. This chain is Ocellatin-L2, found in Leptodactylus laticeps (Santa Fe frog).